The chain runs to 316 residues: Probable cell division protein WhiA (316 aa).

A DNA-binding region (H-T-H motif) is located at residues 275 to 309 (TLKELGEMVSGGKISKSGINHRLRKIDDIAEKLRA).

This sequence belongs to the WhiA family.

Involved in cell division and chromosome segregation. In Bacillus anthracis (strain CDC 684 / NRRL 3495), this protein is Probable cell division protein WhiA.